The chain runs to 40 residues: Dolichyl-diphosphooligosaccharide--protein glycosyltransferase subunit 4 (40 aa).

Over 1 to 4 (MITD) the chain is Lumenal. A helical membrane pass occupies residues 5 to 25 (VQLAIFSNVLGVFLFLLVVAY). At 26–40 (HYINANTGKPIPKAK) the chain is on the cytoplasmic side.

The protein belongs to the OST4 family. In terms of assembly, component of the oligosaccharyltransferase (OST) complex.

It localises to the endoplasmic reticulum membrane. Subunit of the oligosaccharyl transferase (OST) complex that catalyzes the initial transfer of a defined glycan (Glc(3)Man(9)GlcNAc(2) in eukaryotes) from the lipid carrier dolichol-pyrophosphate to an asparagine residue within an Asn-X-Ser/Thr consensus motif in nascent polypeptide chains, the first step in protein N-glycosylation. N-glycosylation occurs cotranslationally and the complex associates with the Sec61 complex at the channel-forming translocon complex that mediates protein translocation across the endoplasmic reticulum (ER). All subunits are required for a maximal enzyme activity. The protein is Dolichyl-diphosphooligosaccharide--protein glycosyltransferase subunit 4 of Drosophila ananassae (Fruit fly).